Reading from the N-terminus, the 437-residue chain is Trigger factor (437 aa).

One can recognise a PPIase FKBP-type domain in the interval 161 to 246 (DDQVNIDFVG…VNSVSAPQLP (86 aa)).

This sequence belongs to the FKBP-type PPIase family. Tig subfamily.

The protein resides in the cytoplasm. The enzyme catalyses [protein]-peptidylproline (omega=180) = [protein]-peptidylproline (omega=0). Its function is as follows. Involved in protein export. Acts as a chaperone by maintaining the newly synthesized protein in an open conformation. Functions as a peptidyl-prolyl cis-trans isomerase. This Pseudomonas putida (strain W619) protein is Trigger factor.